The primary structure comprises 510 residues: Arginine biosynthesis bifunctional protein ArgJ, mitochondrial (510 aa).

A compositionally biased stretch (polar residues) spans 57-70 (TSTNEPSAATTNVP). The tract at residues 57–76 (TSTNEPSAATTNVPHPQEAP) is disordered. Thr-222, Lys-248, Thr-267, and Glu-364 together coordinate substrate. The Nucleophile role is filled by Thr-267.

Belongs to the ArgJ family. In terms of assembly, heterodimer of an alpha and a beta chain. The alpha and beta chains are autoproteolytically processed from a single precursor protein within the mitochondrion.

Its subcellular location is the mitochondrion matrix. It carries out the reaction N(2)-acetyl-L-ornithine + L-glutamate = N-acetyl-L-glutamate + L-ornithine. The catalysed reaction is L-glutamate + acetyl-CoA = N-acetyl-L-glutamate + CoA + H(+). It functions in the pathway amino-acid biosynthesis; L-arginine biosynthesis; L-ornithine and N-acetyl-L-glutamate from L-glutamate and N(2)-acetyl-L-ornithine (cyclic): step 1/1. The protein operates within amino-acid biosynthesis; L-arginine biosynthesis; N(2)-acetyl-L-ornithine from L-glutamate: step 1/4. In terms of biological role, catalyzes two activities which are involved in the cyclic version of arginine biosynthesis: the synthesis of acetylglutamate from glutamate and acetyl-CoA, and of ornithine by transacetylation between acetylornithine and glutamate. This chain is Arginine biosynthesis bifunctional protein ArgJ, mitochondrial, found in Malassezia globosa (strain ATCC MYA-4612 / CBS 7966) (Dandruff-associated fungus).